The following is a 173-amino-acid chain: Tumor necrosis factor ligand superfamily member 18 (173 aa).

Over 1–20 (MEEMPLRESSPQRAERCKKS) the chain is Cytoplasmic. The helical; Signal-anchor for type II membrane protein transmembrane segment at 21–41 (WLLCIVALLLMLLCSLGTLIY) threads the bilayer. One can recognise a THD domain in the interval 40–166 (IYTSLKPTAI…TNTYWGIILM (127 aa)). At 42–173 (TSLKPTAIES…ILMPDLPFIS (132 aa)) the chain is on the extracellular side. A disulfide bond links cysteine 52 and cysteine 72. Asparagine 74 carries N-linked (GlcNAc...) asparagine glycosylation.

Belongs to the tumor necrosis factor family. As to quaternary structure, homotrimer. Homodimer. Post-translationally, N-glycosylated. As to expression, detected in immature and mature dendritic cells and in macrophages (at protein level). Detected in spleen, lung, heart, thymus, monocytes, macrophages, B-cells and dendritic cells.

The protein resides in the cell membrane. Its function is as follows. Cytokine that binds to TNFRSF18/AITR/GITR. Regulates T-cell responses. Can function as costimulator and lower the threshold for T-cell activation and T-cell proliferation. Important for interactions between activated T-lymphocytes and endothelial cells. Mediates activation of NF-kappa-B. Triggers increased phosphorylation of STAT1 and up-regulates expression of VCAM1 and ICAM1. Promotes leukocyte adhesion to endothelial cells. Regulates migration of monocytes from the splenic reservoir to sites of inflammation. This is Tumor necrosis factor ligand superfamily member 18 (Tnfsf18) from Mus musculus (Mouse).